Consider the following 140-residue polypeptide: Large ribosomal subunit protein uL22c (140 aa).

The protein belongs to the universal ribosomal protein uL22 family. In terms of assembly, part of the 50S ribosomal subunit.

The protein localises to the plastid. Its subcellular location is the chloroplast. In terms of biological role, this protein binds specifically to 23S rRNA. The globular domain of the protein is located near the polypeptide exit tunnel on the outside of the subunit, while an extended beta-hairpin is found that lines the wall of the exit tunnel in the center of the 70S ribosome. This Calycanthus floridus var. glaucus (Eastern sweetshrub) protein is Large ribosomal subunit protein uL22c (rpl22).